A 411-amino-acid polypeptide reads, in one-letter code: Corticotropin-releasing factor receptor 2 (411 aa).

The segment at residues 1 to 19 (MDAALLLSLLEANCSLALA) is a signal peptide (not cleaved). Over 1 to 108 (MDAALLLSLL…EPILDDKQRK (108 aa)) the chain is Extracellular. N-linked (GlcNAc...) asparagine glycans are attached at residues Asn-13, Asn-41, Asn-74, Asn-86, and Asn-94. 3 disulfide bridges follow: Cys-14-Cys-50, Cys-40-Cys-83, and Cys-64-Cys-98. The helical transmembrane segment at 109–139 (YDLHYRIALIVNYLGHCVSVVALVAAFLLFL) threads the bilayer. Over 140–146 (VLRSIRC) the chain is Cytoplasmic. The helical transmembrane segment at 147–171 (LRNVIHWNLITTFILRNIAWFLLQL) threads the bilayer. Residues 172 to 185 (IDHEVHEGNEVWCR) are Extracellular-facing. Cys-184 and Cys-254 form a disulfide bridge. A helical transmembrane segment spans residues 186–214 (CITTIFNYFVVTNFFWMFVEGCYLHTAIV). Residues 215 to 221 (MTYSTEH) are Cytoplasmic-facing. Residues 222–249 (LRKWLFLFIGWCIPCPIIIAWAVGKLYY) traverse the membrane as a helical segment. Over 250-265 (ENEQCWFGKEAGDLVD) the chain is Extracellular. The helical transmembrane segment at 266 to 291 (YIYQGPVMLVLLINFVFLFNIVRILM) threads the bilayer. Residues 292-302 (TKLRASTTSET) are Cytoplasmic-facing. A helical membrane pass occupies residues 303 to 327 (IQYRKAVKATLVLLPLLGITYMLFF). The Extracellular segment spans residues 328 to 334 (VNPGEDD). A helical transmembrane segment spans residues 335–364 (LSQIVFIYFNSFLQSFQGFFVSVFYCFFNG). Topologically, residues 365-411 (EVRAALRKRWHRWQDHHALRVPVARAMSIPTSPTRISFHSIKQTAAV) are cytoplasmic.

It belongs to the G-protein coupled receptor 2 family. Monomer. Interacts with CRF, UCN, UCN2 and UCN3. Post-translationally, a N-glycosylation site within the signal peptide impedes its proper cleavage and function. As to expression, highly expressed in the heart. Also expressed in lungs, skeletal muscle, gastrointestinal tract, epididymis, and brain.

The protein resides in the cell membrane. Functionally, G-protein coupled receptor for CRH (corticotropin-releasing factor), UCN (urocortin), UCN2 and UCN3. Has high affinity for UCN. Ligand binding causes a conformation change that triggers signaling via guanine nucleotide-binding proteins (G proteins) and down-stream effectors, such as adenylate cyclase. Promotes the activation of adenylate cyclase, leading to increased intracellular cAMP levels. The chain is Corticotropin-releasing factor receptor 2 (Crhr2) from Mus musculus (Mouse).